The chain runs to 115 residues: Nitrogenase-stabilizing/protective protein NifW (115 aa).

Belongs to the NifW family. Homotrimer; associates with NifD.

May protect the nitrogenase Fe-Mo protein from oxidative damage. This is Nitrogenase-stabilizing/protective protein NifW from Rhodopseudomonas palustris (strain BisB18).